Consider the following 635-residue polypeptide: Threonine--tRNA ligase (635 aa).

The interval 1 to 144 (MQLLLIHSDY…RSIRPEGTQR (144 aa)) is editing domain. Positions 215-514 (PHVELMRRLE…TEEGKVPMLP (300 aa)) are catalytic. Zn(2+)-binding residues include C307, H359, and H483.

Belongs to the class-II aminoacyl-tRNA synthetase family. In terms of assembly, homodimer. Requires Zn(2+) as cofactor.

It localises to the cytoplasm. It catalyses the reaction tRNA(Thr) + L-threonine + ATP = L-threonyl-tRNA(Thr) + AMP + diphosphate + H(+). Functionally, catalyzes the attachment of threonine to tRNA(Thr) in a two-step reaction: L-threonine is first activated by ATP to form Thr-AMP and then transferred to the acceptor end of tRNA(Thr). Also edits incorrectly charged L-seryl-tRNA(Thr). This chain is Threonine--tRNA ligase, found in Methanosarcina barkeri (strain Fusaro / DSM 804).